The sequence spans 391 residues: DNA replication and repair protein RecF (391 aa).

30–37 lines the ATP pocket; the sequence is GSNGQGKT.

It belongs to the RecF family.

Its subcellular location is the cytoplasm. Its function is as follows. The RecF protein is involved in DNA metabolism; it is required for DNA replication and normal SOS inducibility. RecF binds preferentially to single-stranded, linear DNA. It also seems to bind ATP. The protein is DNA replication and repair protein RecF of Saccharopolyspora erythraea (strain ATCC 11635 / DSM 40517 / JCM 4748 / NBRC 13426 / NCIMB 8594 / NRRL 2338).